Here is a 659-residue protein sequence, read N- to C-terminus: UvrABC system protein B (659 aa).

Residues 27 to 414 (EGLEQNKKSQ…AHGEIVKQII (388 aa)) enclose the Helicase ATP-binding domain. 40-47 (GVTGSGKT) lines the ATP pocket. The short motif at 93-116 (YFDYYRPEAYMPNTDTYIDKTTKS) is the Beta-hairpin element. The Helicase C-terminal domain occupies 432 to 594 (QVEDMFDEIQ…IIPKTIIKPI (163 aa)). Positions 624-659 (EALVKDLRNQMLDASKQLNFERAAELRDIILELEAN) constitute a UVR domain.

Belongs to the UvrB family. In terms of assembly, forms a heterotetramer with UvrA during the search for lesions. Interacts with UvrC in an incision complex.

Its subcellular location is the cytoplasm. Functionally, the UvrABC repair system catalyzes the recognition and processing of DNA lesions. A damage recognition complex composed of 2 UvrA and 2 UvrB subunits scans DNA for abnormalities. Upon binding of the UvrA(2)B(2) complex to a putative damaged site, the DNA wraps around one UvrB monomer. DNA wrap is dependent on ATP binding by UvrB and probably causes local melting of the DNA helix, facilitating insertion of UvrB beta-hairpin between the DNA strands. Then UvrB probes one DNA strand for the presence of a lesion. If a lesion is found the UvrA subunits dissociate and the UvrB-DNA preincision complex is formed. This complex is subsequently bound by UvrC and the second UvrB is released. If no lesion is found, the DNA wraps around the other UvrB subunit that will check the other stand for damage. This is UvrABC system protein B from Mycoplasma mobile (strain ATCC 43663 / 163K / NCTC 11711) (Mesomycoplasma mobile).